We begin with the raw amino-acid sequence, 454 residues long: Mitochondrial distribution and morphology protein 10 (454 aa).

The protein belongs to the MDM10 family. In terms of assembly, component of the ER-mitochondria encounter structure (ERMES) or MDM complex, composed of MMM1, MDM10, MDM12 and MDM34. Associates with the mitochondrial outer membrane sorting assembly machinery SAM(core) complex.

Its subcellular location is the mitochondrion outer membrane. Its function is as follows. Component of the ERMES/MDM complex, which serves as a molecular tether to connect the endoplasmic reticulum and mitochondria. Components of this complex are involved in the control of mitochondrial shape and protein biogenesis and may function in phospholipid exchange. MDM10 is involved in the late assembly steps of the general translocase of the mitochondrial outer membrane (TOM complex). Functions in the TOM40-specific route of the assembly of outer membrane beta-barrel proteins, including the association of TOM40 with the receptor TOM22 and small TOM proteins. Can associate with the SAM(core) complex as well as the MDM12-MMM1 complex, both involved in late steps of the major beta-barrel assembly pathway, that is responsible for biogenesis of all outer membrane beta-barrel proteins. May act as a switch that shuttles between both complexes and channels precursor proteins into the TOM40-specific pathway. Plays a role in mitochondrial morphology and in the inheritance of mitochondria. The protein is Mitochondrial distribution and morphology protein 10 of Candida tropicalis (strain ATCC MYA-3404 / T1) (Yeast).